A 586-amino-acid polypeptide reads, in one-letter code: CTP synthase (586 aa).

The tract at residues 1-278 (MRKHPQTATK…DAFVVRRLNL (278 aa)) is amidoligase domain. A CTP-binding site is contributed by Ser20. Ser20 lines the UTP pocket. ATP is bound by residues 21–26 (SLGKGL) and Asp78. Asp78 and Glu152 together coordinate Mg(2+). Residues 159 to 161 (DIE), 199 to 204 (KTKPTQ), and Lys235 each bind CTP. UTP contacts are provided by residues 199–204 (KTKPTQ) and Lys235. The 249-residue stretch at 303 to 551 (RIALVGKYVE…VGAAIDYKAG (249 aa)) folds into the Glutamine amidotransferase type-1 domain. Gly366 is a binding site for L-glutamine. Cys393 (nucleophile; for glutamine hydrolysis) is an active-site residue. L-glutamine contacts are provided by residues 394–397 (LGLQ), Glu416, and Arg477. Residues His524 and Glu526 contribute to the active site. The disordered stretch occupies residues 560 to 586 (EIPEHTPNGSSHRDGVGQPLPEPASRG).

This sequence belongs to the CTP synthase family. Homotetramer.

It carries out the reaction UTP + L-glutamine + ATP + H2O = CTP + L-glutamate + ADP + phosphate + 2 H(+). The enzyme catalyses L-glutamine + H2O = L-glutamate + NH4(+). It catalyses the reaction UTP + NH4(+) + ATP = CTP + ADP + phosphate + 2 H(+). The protein operates within pyrimidine metabolism; CTP biosynthesis via de novo pathway; CTP from UDP: step 2/2. Its activity is regulated as follows. Allosterically activated by GTP, when glutamine is the substrate; GTP has no effect on the reaction when ammonia is the substrate. The allosteric effector GTP functions by stabilizing the protein conformation that binds the tetrahedral intermediate(s) formed during glutamine hydrolysis. Inhibited by the product CTP, via allosteric rather than competitive inhibition. Catalyzes the ATP-dependent amination of UTP to CTP with either L-glutamine or ammonia as the source of nitrogen. Regulates intracellular CTP levels through interactions with the four ribonucleotide triphosphates. The polypeptide is CTP synthase (Mycobacterium tuberculosis (strain CDC 1551 / Oshkosh)).